Consider the following 387-residue polypeptide: Glutamate N-acetyltransferase (387 aa).

Residues threonine 140, lysine 162, threonine 173, glutamate 257, asparagine 382, and threonine 387 each coordinate substrate. Threonine 173 serves as the catalytic Nucleophile.

This sequence belongs to the ArgJ family. Heterotetramer of two alpha and two beta chains.

It localises to the cytoplasm. The enzyme catalyses N(2)-acetyl-L-ornithine + L-glutamate = N-acetyl-L-glutamate + L-ornithine. It functions in the pathway amino-acid biosynthesis; L-arginine biosynthesis; L-ornithine and N-acetyl-L-glutamate from L-glutamate and N(2)-acetyl-L-ornithine (cyclic): step 1/1. Its function is as follows. Catalyzes the transfer of the acetyl group from N(2)-acetylornithine to glutamate, forming N-acetylglutamate and L-ornithine. The chain is Glutamate N-acetyltransferase from Methanopyrus kandleri (strain AV19 / DSM 6324 / JCM 9639 / NBRC 100938).